Here is a 458-residue protein sequence, read N- to C-terminus: Preferentially expressed antigen in melanoma-like protein 1 (458 aa).

An LRR 1; degenerate repeat occupies 99–126 (RCKLQVLDLRVMPLKLWNRLPVFGTAGC). An LRR 2; degenerate repeat occupies 176–200 (SLCCCKLQIWAMSMYYHRKLLEILD). The stretch at 201-227 (LDSVQELRMYCISNPVCLLNFAPYLGR) is one LRR 3; degenerate repeat. An LRR 4; degenerate repeat occupies 228–263 (MRNLRCLILSHLWQTFSMTPVEKQQVITQFTSQFLK). 5 LRR repeats span residues 264–289 (LKCLQILHLDTVFFLEGHLDELFWWL), 290–321 (KTPLETLSVIDCNLSKSDWFHISEFQCTSQLK), 322–340 (HLNLKWVKLTHLSPEPLRV), 346–373 (ASTLTSLDLEGCQMMDSQLSAILPALRC), and 374–398 (CTQLTKFNFHGNYISMPILRELAYN).

Belongs to the PRAME family. In terms of tissue distribution, specifically expressed in testis (at protein level).

It is found in the cytoplasm. It localises to the cytoplasmic vesicle. Its subcellular location is the secretory vesicle. The protein resides in the acrosome. The protein localises to the cell projection. It is found in the cilium. It localises to the flagellum. In terms of biological role, may play a role in acrosome development and also in sperm maturation and motility. The sequence is that of Preferentially expressed antigen in melanoma-like protein 1 from Mus musculus (Mouse).